Here is a 177-residue protein sequence, read N- to C-terminus: Nucleoside triphosphate/diphosphate phosphatase (177 aa).

Catalysis depends on R23, which acts as the Proton donor. Mg(2+) contacts are provided by N87, D103, D105, D107, D120, and E123.

It belongs to the Ntdp family. Mg(2+) serves as cofactor.

The enzyme catalyses a ribonucleoside 5'-triphosphate + H2O = a ribonucleoside 5'-diphosphate + phosphate + H(+). It carries out the reaction a ribonucleoside 5'-diphosphate + H2O = a ribonucleoside 5'-phosphate + phosphate + H(+). In terms of biological role, has nucleoside phosphatase activity towards nucleoside triphosphates and nucleoside diphosphates. The chain is Nucleoside triphosphate/diphosphate phosphatase from Streptococcus agalactiae serotype Ia (strain ATCC 27591 / A909 / CDC SS700).